A 147-amino-acid polypeptide reads, in one-letter code: Large ribosomal subunit protein uL15 (147 aa).

The interval 16–63 is disordered; the sequence is SSRARVGRGIGSGLGKTAGRGHKGSFARKGGGKIKPGFEGGQTPMQRR. Over residues 23–33 the composition is skewed to gly residues; sequence RGIGSGLGKTA. Residues 34–47 are compositionally biased toward basic residues; it reads GRGHKGSFARKGGG.

It belongs to the universal ribosomal protein uL15 family. In terms of assembly, part of the 50S ribosomal subunit.

Functionally, binds to the 23S rRNA. This chain is Large ribosomal subunit protein uL15, found in Xylella fastidiosa (strain Temecula1 / ATCC 700964).